We begin with the raw amino-acid sequence, 177 residues long: CASP-like protein 4D1 (177 aa).

Residues 1–20 lie on the Cytoplasmic side of the membrane; that stretch reads MTAPTAPSMAAPPAPSMVSR. Residues 21–41 form a helical membrane-spanning segment; sequence MTALFLRVLTFAFLMVSLVIM. Residues 42 to 66 lie on the Extracellular side of the membrane; that stretch reads TTNTGTIEIGIDEFKVRSKDFYSYR. Residues 67 to 87 traverse the membrane as a helical segment; sequence YMLAAIAFGLTYTILQIALTL. Topologically, residues 88–107 are cytoplasmic; the sequence is NHISKRNGAQTSGDGNLVFD. Residues 108-128 form a helical membrane-spanning segment; the sequence is FYGDKVVSYILATGAAAAFGA. Topologically, residues 129–153 are extracellular; sequence TKELKTQLAGLGGDKFFNKGYASAS. Residues 154–174 form a helical membrane-spanning segment; it reads LLLLGFVCTAILSVFSSYALP. The Cytoplasmic segment spans residues 175-177; that stretch reads KKV.

This sequence belongs to the Casparian strip membrane proteins (CASP) family. Homodimer and heterodimers.

The protein localises to the cell membrane. The chain is CASP-like protein 4D1 from Populus trichocarpa (Western balsam poplar).